Reading from the N-terminus, the 119-residue chain is UPF0102 protein GFO_3098 (119 aa).

It belongs to the UPF0102 family.

This chain is UPF0102 protein GFO_3098, found in Christiangramia forsetii (strain DSM 17595 / CGMCC 1.15422 / KT0803) (Gramella forsetii).